The following is a 149-amino-acid chain: Calmodulin (149 aa).

Residue Ala-2 is modified to N-acetylalanine. EF-hand domains follow at residues 8–43 (EQIA…LGQN), 44–79 (PTEA…KMKD), 81–116 (DSEE…LGEK), and 117–149 (LTDE…MMSK). Positions 21, 23, 25, 27, 32, 57, 59, 61, 63, 68, 94, 96, 98, and 105 each coordinate Ca(2+). Lys-116 carries the N6,N6,N6-trimethyllysine modification. Residues Asp-130, Asp-132, Asp-134, Gln-136, and Glu-141 each coordinate Ca(2+).

The protein belongs to the calmodulin family.

In terms of biological role, calmodulin mediates the control of a large number of enzymes, ion channels and other proteins by Ca(2+). Among the enzymes to be stimulated by the calmodulin-Ca(2+) complex are a number of protein kinases and phosphatases. This is Calmodulin from Lumbricus rubellus (Humus earthworm).